The primary structure comprises 209 residues: Probable glutathione peroxidase 8-A (209 aa).

The helical transmembrane segment at 18 to 40 threads the bilayer; it reads VSVVFLSMLLCTGILCVLQLGFL. Cysteine 79 is a catalytic residue.

It belongs to the glutathione peroxidase family.

It localises to the membrane. The enzyme catalyses 2 glutathione + H2O2 = glutathione disulfide + 2 H2O. The sequence is that of Probable glutathione peroxidase 8-A (gpx8-a) from Xenopus laevis (African clawed frog).